The chain runs to 264 residues: Thymidylate synthase (264 aa).

Residue Arg-21 participates in dUMP binding. His-51 is a binding site for (6R)-5,10-methylene-5,6,7,8-tetrahydrofolate. 126–127 (RR) provides a ligand contact to dUMP. The active-site Nucleophile is the Cys-146. DUMP is bound by residues 166–169 (RSAD), Asn-177, and 207–209 (HLY). Position 169 (Asp-169) interacts with (6R)-5,10-methylene-5,6,7,8-tetrahydrofolate. Position 263 (Ala-263) interacts with (6R)-5,10-methylene-5,6,7,8-tetrahydrofolate.

This sequence belongs to the thymidylate synthase family. Bacterial-type ThyA subfamily. As to quaternary structure, homodimer.

It localises to the cytoplasm. The catalysed reaction is dUMP + (6R)-5,10-methylene-5,6,7,8-tetrahydrofolate = 7,8-dihydrofolate + dTMP. Its pathway is pyrimidine metabolism; dTTP biosynthesis. Its function is as follows. Catalyzes the reductive methylation of 2'-deoxyuridine-5'-monophosphate (dUMP) to 2'-deoxythymidine-5'-monophosphate (dTMP) while utilizing 5,10-methylenetetrahydrofolate (mTHF) as the methyl donor and reductant in the reaction, yielding dihydrofolate (DHF) as a by-product. This enzymatic reaction provides an intracellular de novo source of dTMP, an essential precursor for DNA biosynthesis. The sequence is that of Thymidylate synthase from Nitrosomonas europaea (strain ATCC 19718 / CIP 103999 / KCTC 2705 / NBRC 14298).